Here is a 338-residue protein sequence, read N- to C-terminus: Sesquiterpene synthase 2 (338 aa).

Mg(2+)-binding residues include D93, N228, S232, and E236. The DDXXD motif motif lies at 93 to 97 (DNISD). Positions 228 to 236 (NDIFSYNVE) match the NSE/DTE motif motif. (2E,6E)-farnesyl diphosphate contacts are provided by R316 and Y317.

It belongs to the terpene synthase family. Mg(2+) serves as cofactor.

It catalyses the reaction (2E,6E)-farnesyl diphosphate = alpha-copaene + diphosphate. The catalysed reaction is (2E,6E)-farnesyl diphosphate = beta-copaene + diphosphate. It carries out the reaction (2E,6E)-farnesyl diphosphate = alpha-muurolene + diphosphate. The enzyme catalyses (2E,6E)-farnesyl diphosphate = gamma-muurolene + diphosphate. It catalyses the reaction (2E,6E)-farnesyl diphosphate = delta-cadinene + diphosphate. Terpene cyclase that catalyzes the cyclization of farnesyl diphosphate (FPP) to various sesquiterpenes, including alpha-copaene, beta-copaene, beta-elemene, alpha-muurolene, gamma-muurolene and delta-cadinene. The chain is Sesquiterpene synthase 2 from Postia placenta (strain ATCC 44394 / Madison 698-R) (Brown rot fungus).